The chain runs to 536 residues: Uridine 5'-monophosphate transferase (536 aa).

Positions 22–84 (ADHPTHTPED…GLQQCSSSPS (63 aa)) are disordered. Over residues 31 to 45 (DSPQTVPSPRSSSAH) the composition is skewed to polar residues. Residues 48-60 (EIQELRSLQETRP) are compositionally biased toward basic and acidic residues. The segment covering 66 to 84 (RSQSRSSKHGLQQCSSSPS) has biased composition (polar residues). LRR repeat units lie at residues 140–164 (AGQA…LHRL), 165–189 (AHLR…SLCK), 191–211 (LERI…IGAL), 212–234 (KNLS…IGQC), 236–257 (SLTT…LANL), and 258–282 (TQLK…NLDD). In terms of domain architecture, Fido spans 377–533 (ITLDRIFKLN…LEGIATVMNQ (157 aa)).

The protein in the C-terminal section; belongs to the fic family. As to quaternary structure, interacts with several members of the Arabidopsis RLCK VIIa subfamily.

The protein resides in the secreted. It localises to the host cell. It is found in the host cell membrane. The catalysed reaction is L-seryl-[protein] + UTP = O-(5'-uridylyl)-L-seryl-[protein] + diphosphate. It catalyses the reaction L-threonyl-[protein] + UTP = uridylyl-L-threonyl-[protein] + diphosphate. In terms of biological role, functions both as a virulence and an avirulence gene in Arabidopsis. Causes disease on the Kashmir (Kas) ecotype, but not on Columbia (Col-0) ecotype. Acts by directly uridylylating the conserved phosphorylation sites in the activation loop of a number of host receptor-like cytoplasmic protein kinases (RLCK), including BIK1, RIPK, PBL1 and PBL2, preventing the activation of these kinases and subsequent signal transduction. In susceptible Arabidopsis plants, uridylylation of BIK1 inhibits the PAMP-triggered immunity (PTI) signaling cascade and thereby promotes bacterial virulence. It also inhibits RPM1-dependent effector-triggered immunity (ETI) in mesophyll tissues by targeting RIPK. In contrast, in the resistant ecotype Col-0, xopAC is a major avirulence gene. Uridylylation of PBL2 triggers the PBL2-RKS1 interaction and thus the assembly of the PBL2-RKS1-ZAR1 complex, which, in turn, activates effector-triggered immunity (ETI) against X.campestris. The protein is Uridine 5'-monophosphate transferase of Xanthomonas campestris pv. campestris (strain 8004).